The primary structure comprises 103 residues: Large ribosomal subunit protein uL24 (103 aa).

It belongs to the universal ribosomal protein uL24 family. As to quaternary structure, part of the 50S ribosomal subunit.

In terms of biological role, one of two assembly initiator proteins, it binds directly to the 5'-end of the 23S rRNA, where it nucleates assembly of the 50S subunit. Its function is as follows. One of the proteins that surrounds the polypeptide exit tunnel on the outside of the subunit. This chain is Large ribosomal subunit protein uL24, found in Histophilus somni (strain 129Pt) (Haemophilus somnus).